The sequence spans 227 residues: GTP:AMP phosphotransferase AK3, mitochondrial (227 aa).

Gly-17, Gly-19, Lys-20, Gly-21, and Thr-22 together coordinate GTP. Lys-20 is subject to N6-succinyllysine. Lys-34 is subject to N6-acetyllysine. At Ser-37 the chain carries Phosphoserine. Residues 37 to 66 are NMP; the sequence is SSGDLLRDNMLRGTEIGVLAKAFIDQGKLI. AMP is bound by residues Ser-38 and Arg-43. Lys-57 carries the post-translational modification N6-succinyllysine. Lys-64 is a binding site for AMP. Lys-64 and Lys-80 each carry N6-acetyllysine; alternate. N6-succinyllysine; alternate occurs at positions 64 and 80. AMP-binding residues include Gly-91, Arg-94, and Gln-98. Residues 127–164 are LID; that stretch reads ARWIHPASGRVYNIEFNPPKTVGIDDLTGEPLIQREDD. 5 residues coordinate GTP: Arg-128, Tyr-138, Asn-139, Arg-161, and Arg-172. Residues Lys-174 and Lys-189 each carry the N6-acetyllysine; alternate modification. N6-succinyllysine; alternate is present on residues Lys-174 and Lys-189. Thr-201 is a binding site for GTP. Lys-203 carries the post-translational modification N6-acetyllysine.

It belongs to the adenylate kinase family. AK3 subfamily. Monomer. Highly expressed in heart, skeletal muscle and liver, moderately expressed in pancreas and kidney, and weakly expressed in placenta, brain and lung.

The protein resides in the mitochondrion matrix. The enzyme catalyses a ribonucleoside 5'-triphosphate + AMP = a ribonucleoside 5'-diphosphate + ADP. It carries out the reaction GTP + AMP = GDP + ADP. The catalysed reaction is ITP + AMP = IDP + ADP. Inhibited by ATP. Its function is as follows. Mitochondrial adenylate kinase with a specific GTP:AMP phosphotransferase activity. Could also use ITP as phosphate donor. Its physiological function is to recycle GTP into GDP which is necessary for the TCA cycle in the mitochondrial matrix. The sequence is that of GTP:AMP phosphotransferase AK3, mitochondrial from Homo sapiens (Human).